Reading from the N-terminus, the 466-residue chain is Asparagine--tRNA ligase (466 aa).

Belongs to the class-II aminoacyl-tRNA synthetase family. Homodimer.

It localises to the cytoplasm. It catalyses the reaction tRNA(Asn) + L-asparagine + ATP = L-asparaginyl-tRNA(Asn) + AMP + diphosphate + H(+). This is Asparagine--tRNA ligase from Xylella fastidiosa (strain Temecula1 / ATCC 700964).